We begin with the raw amino-acid sequence, 508 residues long: Glycerol kinase (508 aa).

T14 is an ADP binding site. The ATP site is built by T14, T15, and S16. T14 contacts sn-glycerol 3-phosphate. R18 is a binding site for ADP. R84, E85, and Y136 together coordinate sn-glycerol 3-phosphate. Glycerol-binding residues include R84, E85, and Y136. Residue H232 is modified to Phosphohistidine; by HPr. Residue D246 coordinates sn-glycerol 3-phosphate. Positions 246 and 247 each coordinate glycerol. Positions 268 and 311 each coordinate ADP. Residues T268, G311, Q315, and G412 each contribute to the ATP site. Positions 412 and 416 each coordinate ADP.

Belongs to the FGGY kinase family. As to quaternary structure, homotetramer and homodimer (in equilibrium). In terms of processing, the phosphoenolpyruvate-dependent sugar phosphotransferase system (PTS), including enzyme I, and histidine-containing protein (HPr) are required for the phosphorylation, which leads to the activation of the enzyme.

It catalyses the reaction glycerol + ATP = sn-glycerol 3-phosphate + ADP + H(+). The protein operates within polyol metabolism; glycerol degradation via glycerol kinase pathway; sn-glycerol 3-phosphate from glycerol: step 1/1. Activated by phosphorylation and inhibited by fructose 1,6-bisphosphate (FBP). Functionally, key enzyme in the regulation of glycerol uptake and metabolism. Catalyzes the phosphorylation of glycerol to yield sn-glycerol 3-phosphate. The polypeptide is Glycerol kinase (Streptococcus pyogenes serotype M18 (strain MGAS8232)).